The sequence spans 265 residues: Hydroxyethylthiazole kinase (265 aa).

Met43 is a binding site for substrate. Residues Arg119 and Ser165 each coordinate ATP. Ala192 lines the substrate pocket.

It belongs to the Thz kinase family. Requires Mg(2+) as cofactor.

It carries out the reaction 5-(2-hydroxyethyl)-4-methylthiazole + ATP = 4-methyl-5-(2-phosphooxyethyl)-thiazole + ADP + H(+). It participates in cofactor biosynthesis; thiamine diphosphate biosynthesis; 4-methyl-5-(2-phosphoethyl)-thiazole from 5-(2-hydroxyethyl)-4-methylthiazole: step 1/1. In terms of biological role, catalyzes the phosphorylation of the hydroxyl group of 4-methyl-5-beta-hydroxyethylthiazole (THZ). This Haemophilus influenzae (strain ATCC 51907 / DSM 11121 / KW20 / Rd) protein is Hydroxyethylthiazole kinase.